The chain runs to 101 residues: Small ribosomal subunit protein bS6 (101 aa).

Belongs to the bacterial ribosomal protein bS6 family.

Functionally, binds together with bS18 to 16S ribosomal RNA. This Nitratidesulfovibrio vulgaris (strain ATCC 29579 / DSM 644 / CCUG 34227 / NCIMB 8303 / VKM B-1760 / Hildenborough) (Desulfovibrio vulgaris) protein is Small ribosomal subunit protein bS6.